A 270-amino-acid chain; its full sequence is UBX domain-containing protein 8 (270 aa).

A topological domain (cytoplasmic) is located at residue methionine 1. The helical transmembrane segment at 2–22 (ASRGVVGIFFLSAVPLVCLEL) threads the bilayer. Topologically, residues 23-33 (RRGIPDIGIKD) are lumenal. Residues 34 to 54 (FLLLCGRILLLLALLTLIISV) form a helical membrane-spanning segment. The Cytoplasmic portion of the chain corresponds to 55 to 270 (TTSWLNSFKS…LILEEKEQTN (216 aa)). Positions 130–171 (SGHKLGGDEGTSQTSFETSNREAAKSQNLPKPLTEFPSPAEQ) are disordered. Serine 167 carries the post-translational modification Phosphoserine. A UBX domain is found at 187–263 (TAEEVVTVAL…GITVDTVLIL (77 aa)).

Interacts with SYVN1 and VCP. As to expression, expressed abundantly in ovary and testis, and weakly in all other tissues tested.

It localises to the endoplasmic reticulum membrane. Its function is as follows. Involved in endoplasmic reticulum-associated degradation (ERAD) for misfolded lumenal proteins, possibly by tethering VCP to the endoplasmic reticulum membrane. May play a role in reproduction. The sequence is that of UBX domain-containing protein 8 (UBXN8) from Homo sapiens (Human).